The primary structure comprises 1086 residues: Lysine-specific demethylase 4B (1086 aa).

Residues 15–57 enclose the JmjN domain; that stretch reads IMTFRPTMDEFRDFNRYVAYIESQGAHRAGLAKIIPPKEWKPR. Tyr133 serves as a coordination point for 2-oxoglutarate. In terms of domain architecture, JmjC spans 146–309; it reads VAQWNIGNLR…YGKVATQCTC (164 aa). Positions 189 and 191 each coordinate Fe cation. The 2-oxoglutarate site is built by Asn199 and Lys207. Residues Cys235 and His241 each contribute to the Zn(2+) site. 2-oxoglutarate is bound at residue Lys242. Residue His277 coordinates Fe cation. Residues Cys307 and Cys309 each contribute to the Zn(2+) site. Basic and acidic residues predominate over residues 379–395; the sequence is SRPWRKAEEERRREPTR. 2 disordered regions span residues 379 to 536 and 575 to 624; these read SRPW…PPGA and PMEL…LSVV. A compositionally biased stretch (basic residues) spans 401–410; sequence SHRRRSQPKK. The segment covering 441–450 has biased composition (acidic residues); it reads MPEDEEEEEL. Positions 456-467 are enriched in basic and acidic residues; sequence HEAEGVEEDGRG. The span at 468 to 480 shows a compositional bias: basic residues; that stretch reads KPRPTKARNKKKT. A compositionally biased stretch (low complexity) spans 512 to 522; that stretch reads GPAMGPMAAEG. Residues 585–597 are compositionally biased toward polar residues; it reads QAQAGDSQGTTPF. Lys599 carries the N6-acetyllysine modification. Residues 719 to 777 form a PHD-type 1 zinc finger; that stretch reads MCFTSSGENTEPLPANSYVGEDGTSPLISCAHCCLQVHASCYGVRPELAKEGWTCSRCA. The C2HC pre-PHD-type zinc finger occupies 782–815; the sequence is TAECCLCNLRGGALQRTTEHRWIHVICAIAVPEV. The PHD-type 2 zinc finger occupies 838–895; sequence LKCIYCRKRMKRVSGACIQCSYEHCSTSFHVTCAHAAGVLMEPDDWPYVVSITCLKHR. 2 Tudor domains span residues 905–962 and 963–1019; these read RTVS…CLRL and GPPP…EELP. The interval 1024–1043 is disordered; that stretch reads SRLSLSTGTPQEPSFSGDDV. The segment covering 1026–1037 has biased composition (polar residues); sequence LSLSTGTPQEPS.

Belongs to the JHDM3 histone demethylase family. Fe(2+) serves as cofactor.

It is found in the nucleus. The enzyme catalyses N(6),N(6),N(6)-trimethyl-L-lysyl(9)-[histone H3] + 2 2-oxoglutarate + 2 O2 = N(6)-methyl-L-lysyl(9)-[histone H3] + 2 formaldehyde + 2 succinate + 2 CO2. Its function is as follows. Histone demethylase that specifically demethylates 'Lys-9' of histone H3, thereby playing a role in histone code. Does not demethylate histone H3 'Lys-4', H3 'Lys-27', H3 'Lys-36' nor H4 'Lys-20'. Only able to demethylate trimethylated H3 'Lys-9', with a weaker activity than KDM4A, KDM4C and KDM4D. Demethylation of Lys residue generates formaldehyde and succinate. Plays a critical role in the development of the central nervous system (CNS). This is Lysine-specific demethylase 4B (Kdm4b) from Mus musculus (Mouse).